A 284-amino-acid chain; its full sequence is MPAAISRNWPAPAKLNLFLHINGRRADGYHELQTLFQFIDCCDMLDFKVTETPELILHSNMSGVVADSDNLILRAAKSLQQTTGFNGGAEIWLDKRLPMGGGLGGGSSDAATTLVALNKLWHTQLSTEELAKIGLKLGADIPVFIHGFAAFAEGVGERLQAVNPSEPWYLVIAPDAHVSTADVFQDPLLPRDTPKLAIDTLMSQPWANDCQKLVVSKYPQVAKALGWLLEYAPSRMTGTGACVFGEFTQQQQALAALAKLPSEMQGFVAQGMNLSPLITRLSHP.

K14 is a catalytic residue. 98 to 108 (PMGGGLGGGSS) provides a ligand contact to ATP. D140 is a catalytic residue.

It belongs to the GHMP kinase family. IspE subfamily.

It catalyses the reaction 4-CDP-2-C-methyl-D-erythritol + ATP = 4-CDP-2-C-methyl-D-erythritol 2-phosphate + ADP + H(+). It participates in isoprenoid biosynthesis; isopentenyl diphosphate biosynthesis via DXP pathway; isopentenyl diphosphate from 1-deoxy-D-xylulose 5-phosphate: step 3/6. In terms of biological role, catalyzes the phosphorylation of the position 2 hydroxy group of 4-diphosphocytidyl-2C-methyl-D-erythritol. The sequence is that of 4-diphosphocytidyl-2-C-methyl-D-erythritol kinase from Shewanella baltica (strain OS223).